The chain runs to 177 residues: Peptide methionine sulfoxide reductase MsrA (177 aa).

The active site involves C11.

This sequence belongs to the MsrA Met sulfoxide reductase family.

The catalysed reaction is L-methionyl-[protein] + [thioredoxin]-disulfide + H2O = L-methionyl-(S)-S-oxide-[protein] + [thioredoxin]-dithiol. It catalyses the reaction [thioredoxin]-disulfide + L-methionine + H2O = L-methionine (S)-S-oxide + [thioredoxin]-dithiol. Functionally, has an important function as a repair enzyme for proteins that have been inactivated by oxidation. Catalyzes the reversible oxidation-reduction of methionine sulfoxide in proteins to methionine. This Trichodesmium erythraeum (strain IMS101) protein is Peptide methionine sulfoxide reductase MsrA.